A 736-amino-acid chain; its full sequence is Catalase-peroxidase 2 (736 aa).

A signal peptide spans 1–23; it reads MIKKTLPVLILLALSGSFSTAVA. A cross-link (tryptophyl-tyrosyl-methioninium (Trp-Tyr) (with M-249)) is located at residues 102–223; it reads WHGAGTYRTY…LAATQMGLIY (122 aa). Residue His-103 is the Proton acceptor of the active site. The tryptophyl-tyrosyl-methioninium (Tyr-Met) (with W-102) cross-link spans 223–249; it reads YVNPEGPGGKPDPLASAKDIREAFSRM. Position 264 (His-264) interacts with heme b.

The protein belongs to the peroxidase family. Peroxidase/catalase subfamily. As to quaternary structure, homodimer or homotetramer. Requires heme b as cofactor. In terms of processing, formation of the three residue Trp-Tyr-Met cross-link is important for the catalase, but not the peroxidase activity of the enzyme.

The protein localises to the periplasm. It catalyses the reaction H2O2 + AH2 = A + 2 H2O. The catalysed reaction is 2 H2O2 = O2 + 2 H2O. Functionally, bifunctional enzyme with both catalase and broad-spectrum peroxidase activity. The sequence is that of Catalase-peroxidase 2 from Escherichia coli O157:H7.